The primary structure comprises 424 residues: Gamma-glutamyl phosphate reductase (424 aa).

Belongs to the gamma-glutamyl phosphate reductase family.

It is found in the cytoplasm. It catalyses the reaction L-glutamate 5-semialdehyde + phosphate + NADP(+) = L-glutamyl 5-phosphate + NADPH + H(+). The protein operates within amino-acid biosynthesis; L-proline biosynthesis; L-glutamate 5-semialdehyde from L-glutamate: step 2/2. Functionally, catalyzes the NADPH-dependent reduction of L-glutamate 5-phosphate into L-glutamate 5-semialdehyde and phosphate. The product spontaneously undergoes cyclization to form 1-pyrroline-5-carboxylate. The protein is Gamma-glutamyl phosphate reductase of Dehalococcoides mccartyi (strain CBDB1).